Consider the following 889-residue polypeptide: Cytoplasmic aconitate hydratase (889 aa).

Residues glutamine 86 and aspartate 205–histidine 207 contribute to the substrate site. The [4Fe-4S] cluster site is built by cysteine 437, cysteine 503, and cysteine 506. Substrate is bound by residues arginine 536, arginine 541, arginine 699, and serine 779–arginine 780.

The protein belongs to the aconitase/IPM isomerase family. As to quaternary structure, interacts (when associated with the 4Fe-4S) with FBXL5. Interacts with frataxin(81-210). [4Fe-4S] cluster is required as a cofactor.

The protein localises to the cytoplasm. It is found in the cytosol. The catalysed reaction is citrate = D-threo-isocitrate. In terms of biological role, bifunctional iron sensor that switches between 2 activities depending on iron availability. Iron deprivation, promotes its mRNA binding activity through which it regulates the expression of genes involved in iron uptake, sequestration and utilization. Binds to iron-responsive elements (IRES) in the untranslated region of target mRNAs preventing for instance the translation of ferritin and aminolevulinic acid synthase and stabilizing the transferrin receptor mRNA. Functionally, conversely, when cellular iron levels are high, binds a 4Fe-4S cluster which precludes RNA binding activity and promotes the aconitase activity, the isomerization of citrate to isocitrate via cis-aconitate. The chain is Cytoplasmic aconitate hydratase (Aco1) from Rattus norvegicus (Rat).